Consider the following 574-residue polypeptide: ATP-dependent RNA helicase RhlB (574 aa).

Residues 9–37 (VTFSSFDLHPALVAGLESAGFTRCTPIQA) carry the Q motif motif. Residues 40 to 220 (LPVALPGGDV…YEHMNEPEKL (181 aa)) form the Helicase ATP-binding domain. Position 53–60 (53–60 (AQTGTGKT)) interacts with ATP. Residues 166 to 169 (DEAD) carry the DEAD box motif. A Helicase C-terminal domain is found at 231–393 (RVRQRIYFPS…PVTSELLTPL (163 aa)). Basic and acidic residues predominate over residues 423–432 (EQRAAEEQRR). A disordered region spans residues 423–574 (EQRAAEEQRR…RRLRSLVSGN (152 aa)). A compositionally biased stretch (gly residues) spans 435–449 (GRSGPGGGSRSGSGG). The segment covering 477 to 495 (AAAAQTEKPVVAAAAAQAP) has biased composition (low complexity). Basic residues predominate over residues 506–515 (PRKRRRRRNG). Low complexity-rich tracts occupy residues 523–535 (PAVASTPIAAPAA) and 553–562 (SSGSPSLLGR).

The protein belongs to the DEAD box helicase family. RhlB subfamily. Component of the RNA degradosome, which is a multiprotein complex involved in RNA processing and mRNA degradation.

The protein resides in the cytoplasm. The enzyme catalyses ATP + H2O = ADP + phosphate + H(+). Its function is as follows. DEAD-box RNA helicase involved in RNA degradation. Has RNA-dependent ATPase activity and unwinds double-stranded RNA. This chain is ATP-dependent RNA helicase RhlB, found in Xanthomonas oryzae pv. oryzae (strain KACC10331 / KXO85).